A 1099-amino-acid polypeptide reads, in one-letter code: Adenylate-forming reductase Nps11 (1099 aa).

An adenylation (A) domain region spans residues 29 to 360; the sequence is AEHNSNVPFF…GTECGGLNSM (332 aa). AMP is bound by residues His244, 347–348, Thr352, and 432–435; these read NV and LVGR. Residues 578 to 664 form the Carrier domain; it reads WSEESLVVWL…RLSQALARVV (87 aa). Ser613 is modified (O-(pantetheine 4'-phosphoryl)serine). The reductase (R) domain stretch occupies residues 717–952; that stretch reads LTGSTGGLGS…VVSWLPPHAV (236 aa). Residues 721 to 724, 809 to 811, Tyr883, and Lys887 contribute to the NADP(+) site; these read TGGL and NAW.

The protein belongs to the adenylate-forming reductase family.

In terms of biological role, adenylate-forming reductase, a natural product biosynthesis enzyme that resembles non-ribosomal peptide synthetases, yet serves to modify one substrate, rather than to condense two or more building blocks. The A-domain preferentially accepts benzoic acid as substrate. The natural product of the enzyme is not yet known. This Serpula lacrymans var. lacrymans (strain S7.9) (Dry rot fungus) protein is Adenylate-forming reductase Nps11.